The following is a 311-amino-acid chain: Malate dehydrogenase (311 aa).

NAD(+) contacts are provided by residues 7 to 13 (GAAGGIG) and Asp34. Substrate contacts are provided by Arg81 and Arg87. Residues Asn94 and 117–119 (ITN) contribute to the NAD(+) site. Positions 119 and 153 each coordinate substrate. Catalysis depends on His177, which acts as the Proton acceptor. Met227 lines the NAD(+) pocket.

The protein belongs to the LDH/MDH superfamily. MDH type 1 family. As to quaternary structure, homodimer.

The catalysed reaction is (S)-malate + NAD(+) = oxaloacetate + NADH + H(+). Catalyzes the reversible oxidation of malate to oxaloacetate. This is Malate dehydrogenase from Yersinia enterocolitica serotype O:8 / biotype 1B (strain NCTC 13174 / 8081).